Consider the following 493-residue polypeptide: Glycerol kinase (493 aa).

Threonine 12 serves as a coordination point for ADP. Threonine 12, threonine 13, and serine 14 together coordinate ATP. Sn-glycerol 3-phosphate is bound at residue threonine 12. Arginine 16 lines the ADP pocket. The sn-glycerol 3-phosphate site is built by arginine 82, glutamate 83, tyrosine 132, and aspartate 239. Glycerol contacts are provided by arginine 82, glutamate 83, tyrosine 132, aspartate 239, and glutamine 240. The ADP site is built by threonine 261 and glycine 303. Residues threonine 261, glycine 303, glutamine 307, and glycine 402 each contribute to the ATP site. Glycine 402 and asparagine 406 together coordinate ADP.

The protein belongs to the FGGY kinase family.

It catalyses the reaction glycerol + ATP = sn-glycerol 3-phosphate + ADP + H(+). The protein operates within polyol metabolism; glycerol degradation via glycerol kinase pathway; sn-glycerol 3-phosphate from glycerol: step 1/1. Functionally, key enzyme in the regulation of glycerol uptake and metabolism. Catalyzes the phosphorylation of glycerol to yield sn-glycerol 3-phosphate. This Thermococcus gammatolerans (strain DSM 15229 / JCM 11827 / EJ3) protein is Glycerol kinase.